The primary structure comprises 99 residues: Aspartyl/glutamyl-tRNA(Asn/Gln) amidotransferase subunit C (99 aa).

Belongs to the GatC family. In terms of assembly, heterotrimer of A, B and C subunits.

It catalyses the reaction L-glutamyl-tRNA(Gln) + L-glutamine + ATP + H2O = L-glutaminyl-tRNA(Gln) + L-glutamate + ADP + phosphate + H(+). The enzyme catalyses L-aspartyl-tRNA(Asn) + L-glutamine + ATP + H2O = L-asparaginyl-tRNA(Asn) + L-glutamate + ADP + phosphate + 2 H(+). In terms of biological role, allows the formation of correctly charged Asn-tRNA(Asn) or Gln-tRNA(Gln) through the transamidation of misacylated Asp-tRNA(Asn) or Glu-tRNA(Gln) in organisms which lack either or both of asparaginyl-tRNA or glutaminyl-tRNA synthetases. The reaction takes place in the presence of glutamine and ATP through an activated phospho-Asp-tRNA(Asn) or phospho-Glu-tRNA(Gln). This is Aspartyl/glutamyl-tRNA(Asn/Gln) amidotransferase subunit C from Burkholderia lata (strain ATCC 17760 / DSM 23089 / LMG 22485 / NCIMB 9086 / R18194 / 383).